Reading from the N-terminus, the 237-residue chain is Dihydroceramide fatty acyl 2-hydroxylase FAH1 (237 aa).

A run of 2 helical transmembrane segments spans residues 50 to 70 (LTLTVWWAVPVIWLPVVVWCI) and 80 to 100 (LPEIVPIVVMGIFIWTFFEYV). Zn(2+) contacts are provided by His102, His107, His123, His126, and His127. The next 2 membrane-spanning stretches (helical) occupy residues 137–157 (VFPPTATAILCFPFWNIAKAI) and 164–184 (PALFGGGMLGYVMYDVTHYYL). Positions 181, 185, 201, 204, and 205 each coordinate Zn(2+).

This sequence belongs to the sterol desaturase family. Interacts with CYTB5-A, CYTB5-B, CYTB5-C and CYTB5-D. Interacts indirectly with BI-1 via CYTB5-D. Zn(2+) serves as cofactor. Expressed in leaves, roots, flowers and seeds.

The protein localises to the endoplasmic reticulum membrane. It carries out the reaction an N-(1,2-saturated acyl)sphinganine + 2 Fe(II)-[cytochrome b5] + O2 + 2 H(+) = an N-[(2'R)-hydroxyacyl]sphinganine + 2 Fe(III)-[cytochrome b5] + H2O. Functionally, fatty acid 2-hydroxylase involved in the alpha-hydroxylation of sphingolipid-associated very long-chain fatty acids (VLCFA). Probably involved in the resistance response to oxidative stress. This Arabidopsis thaliana (Mouse-ear cress) protein is Dihydroceramide fatty acyl 2-hydroxylase FAH1.